The sequence spans 427 residues: MELNIKMDRSKELFEESKKYLVGGVNSPVRSFKPFPFFVKSAKDCFLYDEDGNEFIDYCLAYGPMVLGHANENILNAVKSQMDLGTAYGVPSEKEILLAKEVINRIPCAEMVRFVNSGTEATMGAIRLARGVTGKDKIIKFEGAFHGAHDYVLVKTGSGALTHGAPNSPGIPEDTTKNTLLIPFNDEDAVRKVISENKNEIACIILEPVMGNVGCILPQDGYLQFLREITEENGILLIFDEVITGFRLSKGGAQEYYGIKSDLATVGKILGGGFPIGAITGKKEYMEQFSPNGQIYQAGTFNGNPVSVTAGIETLKNLEDKFYKETTKKADILSDFLRETAEKYNISAKVYNVASIFQVYFNEKEVVTYEDAKSSDTEKFMRYFYTLLENGVFVAPSQFECCFTSIKHNDEVLEKTMNAIDIAMKKL.

An N6-(pyridoxal phosphate)lysine modification is found at Lys268.

The protein belongs to the class-III pyridoxal-phosphate-dependent aminotransferase family. HemL subfamily. Pyridoxal 5'-phosphate serves as cofactor.

It is found in the cytoplasm. The enzyme catalyses (S)-4-amino-5-oxopentanoate = 5-aminolevulinate. The protein operates within porphyrin-containing compound metabolism; protoporphyrin-IX biosynthesis; 5-aminolevulinate from L-glutamyl-tRNA(Glu): step 2/2. This is Glutamate-1-semialdehyde 2,1-aminomutase from Methanococcus maripaludis (strain C6 / ATCC BAA-1332).